A 312-amino-acid polypeptide reads, in one-letter code: tRNA uridine(34) hydroxylase (312 aa).

Positions 130-225 (RGDEVVFFDG…YGEQFGNKGL (96 aa)) constitute a Rhodanese domain. The active-site Cysteine persulfide intermediate is cysteine 185.

This sequence belongs to the TrhO family.

The enzyme catalyses uridine(34) in tRNA + AH2 + O2 = 5-hydroxyuridine(34) in tRNA + A + H2O. Its function is as follows. Catalyzes oxygen-dependent 5-hydroxyuridine (ho5U) modification at position 34 in tRNAs. This Corynebacterium glutamicum (strain R) protein is tRNA uridine(34) hydroxylase.